The primary structure comprises 431 residues: MKHLTNMVEQHKRGKANGIYAVCSAHPLVLESAIRYAHANHTPLLIEATSNQVDQFGGYTGMTPADFRDFVCQLADSLGFPQSELILGGDHLGPNRWQNLPATQAMANADDLIKSYVAAGFKKIHLDCSMSCADDPVPLTDEIVAERAARLAKVAEETCQQHFGKSDLVYVIGTEVPVPGGAHETLTELEVTTPEAARATLEAHRYAFEKQGLDAIWPRINALVVQPGVEFDHTQIIDYQPQKATELSKMVETYDMLVFEAHSTDYQTPQSLRQLVKDHFAILKVGPALTFALREALFSLAAIEEELLPAKACSGLRHVLESVMLDRPEYWQNHYHGDGNARRLARGYSYSDRVRYYWPDSQIDDAFERLVRNLADEPIPLPLISQYLPLQYVKVREGDLNATPRELIISHIQDILQQYHAACYGTTFYNE.

Belongs to the GatZ/KbaZ family. KbaZ subfamily. Forms a complex with KbaY.

The protein operates within carbohydrate metabolism; D-tagatose 6-phosphate degradation; D-glyceraldehyde 3-phosphate and glycerone phosphate from D-tagatose 6-phosphate: step 2/2. Component of the tagatose-1,6-bisphosphate aldolase KbaYZ that is required for full activity and stability of the Y subunit. Could have a chaperone-like function for the proper and stable folding of KbaY. When expressed alone, KbaZ does not show any aldolase activity. This is D-tagatose-1,6-bisphosphate aldolase subunit KbaZ from Salmonella arizonae (strain ATCC BAA-731 / CDC346-86 / RSK2980).